The primary structure comprises 645 residues: Glucans biosynthesis glucosyltransferase H (645 aa).

The span at 1-13 (MDGTVTPSPTTTA) shows a compositional bias: polar residues. A disordered region spans residues 1–32 (MDGTVTPSPTTTAMPPVSALDAGTPTLPPEAP). Transmembrane regions (helical) follow at residues 64–84 (LIGG…SVLW), 98–118 (LFVL…AGFV), 423–443 (APMW…GGGI), 465–485 (AIWI…LGYI), 504–524 (AVSI…VMYL), 559–579 (YGGL…VSPA), and 580–600 (LAAW…VVAL).

The protein belongs to the glycosyltransferase 2 family. OpgH subfamily.

The protein localises to the cell inner membrane. It functions in the pathway glycan metabolism; osmoregulated periplasmic glucan (OPG) biosynthesis. Functionally, involved in the biosynthesis of osmoregulated periplasmic glucans (OPGs). This is Glucans biosynthesis glucosyltransferase H from Xanthomonas euvesicatoria pv. vesicatoria (strain 85-10) (Xanthomonas campestris pv. vesicatoria).